We begin with the raw amino-acid sequence, 270 residues long: Splicing factor YJU2 (270 aa).

Positions 1–32 (MSERKVLNKYIPPDYDPSIRPPKKKKKFQGPN) are disordered. Cysteine 48, cysteine 51, cysteine 84, and cysteine 87 together coordinate Zn(2+). The segment at 251–270 (PNFQPPKYAKRKMEKKKVLV) is disordered. Over residues 258–270 (YAKRKMEKKKVLV) the composition is skewed to basic residues.

The protein belongs to the CWC16 family. YJU2 subfamily. Component of the spliceosome. Present in the activated B complex, the catalytically activated B* complex which catalyzes the branching, the catalytic step 1 C complex catalyzing the exon ligation, and the postcatalytic P complex containing the ligated exons (mRNA) and the excised lariat intron. Belongs to the 40S cdc5-associated complex (or cwf complex), a spliceosome sub-complex reminiscent of a late-stage spliceosome composed of the U2, U5 and U6 snRNAs and at least brr2, cdc5, cwf2/prp3, cwf3/syf1, cwf4/syf3, cwf5/ecm2, spp42/cwf6, cwf7/spf27, cwf8, cwf9, cwf10, cwf11, cwf12, prp45/cwf13, cwf14, cwf15, cwf16, cwf17, cwf18, cwf19, cwf20, cwf21, cwf22, cwf23, cwf24, cwf25, cwf26, cyp7/cwf27, cwf28, cwf29/ist3, lea1, msl1, prp5/cwf1, prp10, prp12/sap130, prp17, prp22, sap61, sap62, sap114, sap145, slu7, smb1, smd1, smd3, smf1, smg1 and syf2.

The protein resides in the nucleus. Functionally, part of the spliceosome which catalyzes two sequential transesterification reactions, first the excision of the non-coding intron from pre-mRNA and then the ligation of the coding exons to form the mature mRNA. Plays a role in stabilizing the structure of the spliceosome catalytic core and docking of the branch helix into the active site, producing 5'-exon and lariat intron-3'-intermediates. The sequence is that of Splicing factor YJU2 (cwf16) from Schizosaccharomyces pombe (strain 972 / ATCC 24843) (Fission yeast).